Consider the following 31-residue polypeptide: GSVPCGESCVWIPCITSIAGCSCSNKVCYMD.

The segment at residues 1 to 31 is a cross-link (cyclopeptide (Gly-Asp)); that stretch reads GSVPCGESCVWIPCITSIAGCSCSNKVCYMD. Disulfide bonds link Cys-5–Cys-21, Cys-9–Cys-23, and Cys-14–Cys-28.

This is a cyclic peptide. As to expression, detected in seeds (at protein level).

Probably participates in a plant defense mechanism. The polypeptide is Cyclotide hyen-J (Pigea enneasperma (Spade flower)).